Here is an 879-residue protein sequence, read N- to C-terminus: Alanine--tRNA ligase (879 aa).

Positions 570, 574, 672, and 676 each coordinate Zn(2+).

This sequence belongs to the class-II aminoacyl-tRNA synthetase family. The cofactor is Zn(2+).

The protein resides in the cytoplasm. It carries out the reaction tRNA(Ala) + L-alanine + ATP = L-alanyl-tRNA(Ala) + AMP + diphosphate. Its function is as follows. Catalyzes the attachment of alanine to tRNA(Ala) in a two-step reaction: alanine is first activated by ATP to form Ala-AMP and then transferred to the acceptor end of tRNA(Ala). Also edits incorrectly charged Ser-tRNA(Ala) and Gly-tRNA(Ala) via its editing domain. This chain is Alanine--tRNA ligase, found in Nitratidesulfovibrio vulgaris (strain ATCC 29579 / DSM 644 / CCUG 34227 / NCIMB 8303 / VKM B-1760 / Hildenborough) (Desulfovibrio vulgaris).